The sequence spans 106 residues: MQNKVHVRKQDTVMVISGKDKGKIGEVLRVLPKSGKVVVKDVNVVTKHQKPSRENMQGGIIHVEAPIYSSKVMLYCTKCKSVTRINHKILDDGTKVRVCKKCGETF.

This sequence belongs to the universal ribosomal protein uL24 family. Part of the 50S ribosomal subunit.

Its function is as follows. One of two assembly initiator proteins, it binds directly to the 5'-end of the 23S rRNA, where it nucleates assembly of the 50S subunit. One of the proteins that surrounds the polypeptide exit tunnel on the outside of the subunit. In Clostridium tetani (strain Massachusetts / E88), this protein is Large ribosomal subunit protein uL24.